An 83-amino-acid polypeptide reads, in one-letter code: UPF0346 protein M28_Spy0369 (83 aa).

It belongs to the UPF0346 family.

This Streptococcus pyogenes serotype M28 (strain MGAS6180) protein is UPF0346 protein M28_Spy0369.